We begin with the raw amino-acid sequence, 540 residues long: Chaperonin GroEL (540 aa).

ATP is bound by residues 29–32 (TLGP), 86–90 (DGTTT), G413, 476–478 (NAA), and D492.

This sequence belongs to the chaperonin (HSP60) family. Forms a cylinder of 14 subunits composed of two heptameric rings stacked back-to-back. Interacts with the co-chaperonin GroES.

It localises to the cytoplasm. It catalyses the reaction ATP + H2O + a folded polypeptide = ADP + phosphate + an unfolded polypeptide.. Together with its co-chaperonin GroES, plays an essential role in assisting protein folding. The GroEL-GroES system forms a nano-cage that allows encapsulation of the non-native substrate proteins and provides a physical environment optimized to promote and accelerate protein folding. This chain is Chaperonin GroEL, found in Streptococcus pneumoniae (strain Hungary19A-6).